The following is an 866-amino-acid chain: Dimethylglycine dehydrogenase, mitochondrial (866 aa).

The transit peptide at 1–50 directs the protein to the mitochondrion; it reads MLRPGAQLLRGLLLRSCPLQGSPGRPRSVCGREGEEKPPLSAETQWKDRA. The disordered stretch occupies residues 20 to 42; sequence QGSPGRPRSVCGREGEEKPPLSA. Residues 59-60, 80-81, and 87-95 each bind FAD; these read CV, EK, and GSTWHAAGL. His-91 carries the post-translational modification Tele-8alpha-FAD histidine. An N6-acetyllysine modification is found at Lys-114. An N6-acetyllysine; alternate modification is found at Lys-148. Position 148 is an N6-succinyllysine; alternate (Lys-148). Lys-168 carries the post-translational modification N6-acetyllysine. Val-219 contacts FAD. An N6-acetyllysine modification is found at Lys-223. An FAD-binding site is contributed by Trp-251. 2 positions are modified to N6-succinyllysine: Lys-317 and Lys-319. An N6-acetyllysine mark is found at Lys-335 and Lys-360. An FAD-binding site is contributed by 397 to 402; sequence FGYGII. 2 positions are modified to N6-acetyllysine; alternate: Lys-434 and Lys-523. Lys-434 and Lys-523 each carry N6-succinyllysine; alternate. 580–582 lines the (6S)-5,6,7,8-tetrahydrofolate pocket; it reads ELT. The residue at position 655 (Lys-655) is an N6-acetyllysine; alternate. Lys-655 carries the post-translational modification N6-succinyllysine; alternate. (6S)-5,6,7,8-tetrahydrofolate-binding positions include Tyr-676, 683–685, and Tyr-744; that span reads ELY. An N6-acetyllysine modification is found at Lys-764. Residue Lys-795 is modified to N6-succinyllysine.

Belongs to the GcvT family. As to quaternary structure, monomer. FAD is required as a cofactor.

It localises to the mitochondrion. It catalyses the reaction (6S)-5,6,7,8-tetrahydrofolyl-(gamma-L-Glu)(n) + N,N-dimethylglycine + oxidized [electron-transfer flavoprotein] + H(+) = (6R)-5,10-methylenetetrahydrofolyl-(gamma-L-Glu)(n) + sarcosine + reduced [electron-transfer flavoprotein]. It participates in amine and polyamine degradation; betaine degradation; sarcosine from betaine: step 2/2. Catalyzes the demethylation of N,N-dimethylglycine to sarcosine. Also has activity with sarcosine in vitro. The polypeptide is Dimethylglycine dehydrogenase, mitochondrial (DMGDH) (Homo sapiens (Human)).